Consider the following 173-residue polypeptide: Large ribosomal subunit protein bL9 (173 aa).

Residues 151–173 form a disordered region; that stretch reads YDDTPDRTETEESTKELQEEHAE.

Belongs to the bacterial ribosomal protein bL9 family.

Its function is as follows. Binds to the 23S rRNA. The polypeptide is Large ribosomal subunit protein bL9 (Lawsonia intracellularis (strain PHE/MN1-00)).